The sequence spans 196 residues: MSYYAFEGLIPVVHPTAFVHPSAVLIGDVIVGAGVYIGPLASLRGDYGRLIVQAGANIQDGCIMHGYCDTDTIVGENGHIGHGAILHGCLIGRDALVGMNSVIMDGAVIGEESIVAAMSFVKAGFRGEKRQLLMGTPARAVRNVSDDELHWKRLNTKEYQDLVGRCHVSLHETQPLRQMEENRPRLQGTTDVTPKR.

The interval 174 to 196 is disordered; it reads QPLRQMEENRPRLQGTTDVTPKR. A compositionally biased stretch (polar residues) spans 187-196; it reads QGTTDVTPKR.

Belongs to the transferase hexapeptide repeat family.

Its pathway is amine and polyamine metabolism; carnitine metabolism. Its function is as follows. Overproduction of CaiE stimulates the activity of CaiB and CaiD. The protein is Carnitine operon protein CaiE (caiE) of Escherichia coli (strain K12).